The sequence spans 117 residues: Immunoglobulin kappa variable 1-33 (117 aa).

The first 22 residues, 1–22, serve as a signal peptide directing secretion; it reads MDMRVPAQLLGLLLLWLSGARC. Residues 23–45 form a framework-1 region; sequence DIQMTQSPSSLSASVGDRVTITC. Residues 24 to 117 enclose the Ig-like domain; sequence IQMTQSPSSL…YYCQQYDNLP (94 aa). An intrachain disulfide couples cysteine 45 to cysteine 110. Residues 46 to 56 are complementarity-determining-1; it reads QASQDISNYLN. The segment at 57–71 is framework-2; sequence WYQQKPGKAPKLLIY. Residues 72 to 78 are complementarity-determining-2; sequence DASNLET. Residues 79–110 form a framework-3 region; the sequence is GVPSRFSGSGSGTDFTFTISSLQPEDIATYYC. The interval 111–117 is complementarity-determining-3; sequence QQYDNLP.

In terms of assembly, immunoglobulins are composed of two identical heavy chains and two identical light chains; disulfide-linked.

It localises to the secreted. The protein resides in the cell membrane. Functionally, v region of the variable domain of immunoglobulin light chains that participates in the antigen recognition. Immunoglobulins, also known as antibodies, are membrane-bound or secreted glycoproteins produced by B lymphocytes. In the recognition phase of humoral immunity, the membrane-bound immunoglobulins serve as receptors which, upon binding of a specific antigen, trigger the clonal expansion and differentiation of B lymphocytes into immunoglobulins-secreting plasma cells. Secreted immunoglobulins mediate the effector phase of humoral immunity, which results in the elimination of bound antigens. The antigen binding site is formed by the variable domain of one heavy chain, together with that of its associated light chain. Thus, each immunoglobulin has two antigen binding sites with remarkable affinity for a particular antigen. The variable domains are assembled by a process called V-(D)-J rearrangement and can then be subjected to somatic hypermutations which, after exposure to antigen and selection, allow affinity maturation for a particular antigen. This is Immunoglobulin kappa variable 1-33 from Homo sapiens (Human).